Here is a 247-residue protein sequence, read N- to C-terminus: Carboxy-S-adenosyl-L-methionine synthase (247 aa).

S-adenosyl-L-methionine-binding positions include Tyr-40, 65-67 (GSS), 90-91 (DN), 122-123 (DI), Asn-137, and Arg-204.

Belongs to the class I-like SAM-binding methyltransferase superfamily. Cx-SAM synthase family. In terms of assembly, homodimer.

It carries out the reaction prephenate + S-adenosyl-L-methionine = carboxy-S-adenosyl-L-methionine + 3-phenylpyruvate + H2O. Catalyzes the conversion of S-adenosyl-L-methionine (SAM) to carboxy-S-adenosyl-L-methionine (Cx-SAM). The protein is Carboxy-S-adenosyl-L-methionine synthase of Pseudomonas savastanoi pv. phaseolicola (strain 1448A / Race 6) (Pseudomonas syringae pv. phaseolicola (strain 1448A / Race 6)).